Here is a 511-residue protein sequence, read N- to C-terminus: Maturase K (511 aa).

The protein belongs to the intron maturase 2 family. MatK subfamily.

The protein localises to the plastid. Its subcellular location is the chloroplast. Usually encoded in the trnK tRNA gene intron. Probably assists in splicing its own and other chloroplast group II introns. This is Maturase K from Pistia stratiotes (Water lettuce).